A 447-amino-acid polypeptide reads, in one-letter code: Argininosuccinate synthase (447 aa).

ATP-binding positions include 20-28 and A46; that span reads AFSGGLDTS. Y102 contacts L-citrulline. 2 residues coordinate ATP: G132 and T134. Residues T134, N138, and D139 each coordinate L-aspartate. N138 is an L-citrulline binding site. D139 is an ATP binding site. The L-citrulline site is built by R142 and S195. D197 is an ATP binding site. T204, E206, and E283 together coordinate L-citrulline.

It belongs to the argininosuccinate synthase family. Type 2 subfamily. In terms of assembly, homotetramer.

The protein resides in the cytoplasm. The catalysed reaction is L-citrulline + L-aspartate + ATP = 2-(N(omega)-L-arginino)succinate + AMP + diphosphate + H(+). The protein operates within amino-acid biosynthesis; L-arginine biosynthesis; L-arginine from L-ornithine and carbamoyl phosphate: step 2/3. The polypeptide is Argininosuccinate synthase (argG) (Neisseria meningitidis serogroup A / serotype 4A (strain DSM 15465 / Z2491)).